Reading from the N-terminus, the 494-residue chain is Costunolide synthase (494 aa).

Residues 3 to 23 (PLTIVSLVVASLFLFAFWALS) traverse the membrane as a helical segment. Residue Cys432 participates in heme binding.

It belongs to the cytochrome P450 family. Requires heme as cofactor.

It localises to the membrane. The catalysed reaction is germacra-1(10),4,11(13)-trien-12-oate + reduced [NADPH--hemoprotein reductase] + O2 = (+)-costunolide + oxidized [NADPH--hemoprotein reductase] + 2 H2O. In terms of biological role, hydroxylates germacrene A acid to 6-alpha-hydroxy-germacrne A acid, a precursor of sesquiterpene lactones that spontaneously undergoes a lactonization which yields costunolide. Costunolide can then spontaneously conjugate to glutathione or cysteine. This is Costunolide synthase (CYP71BL3) from Cichorium intybus (Chicory).